A 756-amino-acid polypeptide reads, in one-letter code: 5-methyltetrahydropteroyltriglutamate--homocysteine methyltransferase (756 aa).

5-methyltetrahydropteroyltri-L-glutamate is bound by residues 16–19 and Lys116; that span reads RELK. Residues 433 to 435 and Glu486 contribute to the L-homocysteine site; that span reads IGS. Residues 433–435 and Glu486 each bind L-methionine; that span reads IGS. Residues 517–518 and Trp563 each bind 5-methyltetrahydropteroyltri-L-glutamate; that span reads RC. An L-homocysteine-binding site is contributed by Asp601. Asp601 is an L-methionine binding site. Glu607 is a binding site for 5-methyltetrahydropteroyltri-L-glutamate. Zn(2+) is bound by residues His643, Cys645, and Glu667. His696 acts as the Proton donor in catalysis. Residue Cys728 participates in Zn(2+) binding.

It belongs to the vitamin-B12 independent methionine synthase family. Requires Zn(2+) as cofactor.

It catalyses the reaction 5-methyltetrahydropteroyltri-L-glutamate + L-homocysteine = tetrahydropteroyltri-L-glutamate + L-methionine. Its pathway is amino-acid biosynthesis; L-methionine biosynthesis via de novo pathway; L-methionine from L-homocysteine (MetE route): step 1/1. Catalyzes the transfer of a methyl group from 5-methyltetrahydrofolate to homocysteine resulting in methionine formation. The chain is 5-methyltetrahydropteroyltriglutamate--homocysteine methyltransferase from Buchnera aphidicola subsp. Baizongia pistaciae (strain Bp).